We begin with the raw amino-acid sequence, 321 residues long: Polygalacturonan/rhamnogalacturonan transport system permease protein YteP (321 aa).

Positions 1–144 (MKTAEAQAPA…YIPHFMSWVI (144 aa)) constitute an ABC transmembrane type-1 domain. The next 3 helical transmembrane spans lie at 21–41 (RKRLLIKLIQQKYLYLMILPG), 63–83 (YQPFLGILGSEWVGLKHFIRL), and 123–143 (IALFKKFVQTLIYIPHFMSWV).

It belongs to the binding-protein-dependent transport system permease family. The complex is probably composed of two ATP-binding proteins (MsmX), two transmembrane proteins (YtcP and YteP) and a solute-binding protein (YtcQ).

Its subcellular location is the cell membrane. Its function is as follows. Involved in pectin degradation. Part of the ABC transporter complex YtcQP-YteP involved in the uptake of polygalacturonan and rhamnogalacturonan type I. Responsible for the translocation of the substrate across the membrane. The sequence is that of Polygalacturonan/rhamnogalacturonan transport system permease protein YteP (yteP) from Bacillus subtilis (strain 168).